The primary structure comprises 450 residues: Phosphoglucosamine mutase (450 aa).

Residue S101 is the Phosphoserine intermediate of the active site. Residues S101, D242, D244, and D246 each coordinate Mg(2+). At S101 the chain carries Phosphoserine.

This sequence belongs to the phosphohexose mutase family. The cofactor is Mg(2+). Post-translationally, activated by phosphorylation.

The enzyme catalyses alpha-D-glucosamine 1-phosphate = D-glucosamine 6-phosphate. Catalyzes the conversion of glucosamine-6-phosphate to glucosamine-1-phosphate. The chain is Phosphoglucosamine mutase from Rhodopseudomonas palustris (strain HaA2).